Reading from the N-terminus, the 184-residue chain is Ribosome-recycling factor (184 aa).

Residues 137–158 form a disordered region; it reads DSIKAKQKDGIPEDEAKRGQDE.

The protein belongs to the RRF family.

It localises to the cytoplasm. Functionally, responsible for the release of ribosomes from messenger RNA at the termination of protein biosynthesis. May increase the efficiency of translation by recycling ribosomes from one round of translation to another. The chain is Ribosome-recycling factor from Desulforamulus reducens (strain ATCC BAA-1160 / DSM 100696 / MI-1) (Desulfotomaculum reducens).